Consider the following 47-residue polypeptide: Sperm protamine P1 (47 aa).

Belongs to the protamine P1 family. In terms of tissue distribution, testis.

It is found in the nucleus. The protein resides in the chromosome. Protamines substitute for histones in the chromatin of sperm during the haploid phase of spermatogenesis. They compact sperm DNA into a highly condensed, stable and inactive complex. This is Sperm protamine P1 (PRM1) from Orcinus orca (Killer whale).